Reading from the N-terminus, the 93-residue chain is UPF0473 protein RBAM_024480 (93 aa).

This sequence belongs to the UPF0473 family.

The chain is UPF0473 protein RBAM_024480 from Bacillus velezensis (strain DSM 23117 / BGSC 10A6 / LMG 26770 / FZB42) (Bacillus amyloliquefaciens subsp. plantarum).